The primary structure comprises 407 residues: Na(+)-translocating NADH-quinone reductase subunit F (407 aa).

The chain crosses the membrane as a helical span at residues 3-23 (IILGVVMFTLIVLALVLVILF). The region spanning 32-126 (GDITISVNDD…DMDIELPEEI (95 aa)) is the 2Fe-2S ferredoxin-type domain. [2Fe-2S] cluster is bound by residues Cys69, Cys75, Cys78, and Cys110. Positions 129 to 269 (VKKWECTVIS…SGPFGEFFAK (141 aa)) constitute an FAD-binding FR-type domain. Residues 272–389 (DAEMVFVGGG…PMMNAAVIGM (118 aa)) form a catalytic region.

This sequence belongs to the NqrF family. Composed of six subunits; NqrA, NqrB, NqrC, NqrD, NqrE and NqrF. [2Fe-2S] cluster serves as cofactor. It depends on FAD as a cofactor.

The protein localises to the cell inner membrane. The enzyme catalyses a ubiquinone + n Na(+)(in) + NADH + H(+) = a ubiquinol + n Na(+)(out) + NAD(+). Functionally, NQR complex catalyzes the reduction of ubiquinone-1 to ubiquinol by two successive reactions, coupled with the transport of Na(+) ions from the cytoplasm to the periplasm. The first step is catalyzed by NqrF, which accepts electrons from NADH and reduces ubiquinone-1 to ubisemiquinone by a one-electron transfer pathway. The sequence is that of Na(+)-translocating NADH-quinone reductase subunit F from Vibrio campbellii (strain ATCC BAA-1116).